A 474-amino-acid chain; its full sequence is Ubiquinol-cytochrome-c reductase complex core protein 2, mitochondrial (474 aa).

Residues 1–42 constitute a mitochondrion transit peptide; that stretch reads MKSVVRSKGTQALFRRFSSALGDSINPNQVGVGDNVIRVNGR.

Belongs to the peptidase M16 family. UQCRC2/QCR2 subfamily. As to quaternary structure, component of the ubiquinol-cytochrome c oxidoreductase (cytochrome b-c1 complex, complex III, CIII), a multisubunit enzyme composed of 3 respiratory subunits cytochrome b, cytochrome c1 and Rieske protein, 2 core protein subunits, and additional low-molecular weight protein subunits. The complex exists as an obligatory dimer and forms supercomplexes (SCs) in the inner mitochondrial membrane with cytochrome c oxidase (complex IV, CIV).

Its subcellular location is the mitochondrion inner membrane. Its function is as follows. Component of the ubiquinol-cytochrome c oxidoreductase, a multisubunit transmembrane complex that is part of the mitochondrial electron transport chain which drives oxidative phosphorylation. The respiratory chain contains 3 multisubunit complexes succinate dehydrogenase (complex II, CII), ubiquinol-cytochrome c oxidoreductase (cytochrome b-c1 complex, complex III, CIII) and cytochrome c oxidase (complex IV, CIV), that cooperate to transfer electrons derived from NADH and succinate to molecular oxygen, creating an electrochemical gradient over the inner membrane that drives transmembrane transport and the ATP synthase. The cytochrome b-c1 complex catalyzes electron transfer from ubiquinol to cytochrome c, linking this redox reaction to translocation of protons across the mitochondrial inner membrane, with protons being carried across the membrane as hydrogens on the quinol. In the process called Q cycle, 2 protons are consumed from the matrix, 4 protons are released into the intermembrane space and 2 electrons are passed to cytochrome c. The protein is Ubiquinol-cytochrome-c reductase complex core protein 2, mitochondrial of Euglena gracilis.